The sequence spans 156 residues: Putative HTH-type transcriptional regulator YffB (156 aa).

Positions 2-137 constitute an HTH rrf2-type domain; sequence KLSSGWEQSV…SNVSLAQVAD (136 aa).

In Lactococcus lactis subsp. lactis (strain IL1403) (Streptococcus lactis), this protein is Putative HTH-type transcriptional regulator YffB (yffB).